The chain runs to 38 residues: Large ribosomal subunit protein bL36A (38 aa).

Belongs to the bacterial ribosomal protein bL36 family.

This chain is Large ribosomal subunit protein bL36A, found in Pectobacterium atrosepticum (strain SCRI 1043 / ATCC BAA-672) (Erwinia carotovora subsp. atroseptica).